We begin with the raw amino-acid sequence, 234 residues long: Probable ascorbate-specific transmembrane electron transporter 1 (234 aa).

Residues 1-9 (MGLGVRAAP) lie on the Cytoplasmic side of the membrane. The helical transmembrane segment at 10–30 (FTYVAHALAVAAATMVLVWCI) threads the bilayer. The region spanning 13-217 (VAHALAVAAA…FGASVVVAAV (205 aa)) is the Cytochrome b561 domain. Over 31–48 (HFRGGLAFEATNKNLIFN) the chain is Extracellular. The chain crosses the membrane as a helical span at residues 49 to 69 (VHPVLMLIGYIILGSEAIMVY). His-50 is a heme b binding site. Residue 65–73 (AIMVYKVLP) coordinates L-ascorbate. Residues 70–82 (KVLPTWKHDTTKL) lie on the Cytoplasmic side of the membrane. The chain crosses the membrane as a helical span at residues 83 to 103 (IHLILHAIALVFGAVGIYCAF). Heme b is bound by residues His-84 and His-118. Topologically, residues 104-121 (KFHNESGIANLYSLHSWL) are extracellular. A monodehydro-L-ascorbate radical-binding site is contributed by 114–123 (LYSLHSWLGI). Residues 122 to 142 (GIGTICLYGIQWIFGFVAFFF) form a helical membrane-spanning segment. Residues 143-151 (PRASPSVRK) lie on the Cytoplasmic side of the membrane. Residues 152–172 (GVLPWHILFGLFVYILALATA) form a helical membrane-spanning segment. Position 157 (His-157) interacts with heme b. The Extracellular portion of the chain corresponds to 173 to 194 (ELGFLEKLTFLQSSGLDKYGAE). A helical membrane pass occupies residues 195–215 (AFLVNFTALIVVLFGASVVVA). Residues 216 to 234 (AVSPARVEEPHEYAPIPES) lie on the Cytoplasmic side of the membrane.

Heme b serves as cofactor.

The protein resides in the membrane. In terms of biological role, two-heme-containing cytochrome. Catalyzes ascorbate-dependent trans-membrane electron transfer by utilizing a concerted H(+)/e(-) transfer mechanism. This chain is Probable ascorbate-specific transmembrane electron transporter 1, found in Oryza sativa subsp. japonica (Rice).